A 958-amino-acid chain; its full sequence is Voltage-gated inwardly rectifying potassium channel KCNH6 (958 aa).

The Cytoplasmic portion of the chain corresponds to 1 to 261 (MPVRRGHVAP…YSPFKAVWDW (261 aa)). Residues 41–70 (IIYCNDGFCELFGYSRVEVMQQPCTCDFLT) form the PAS domain. Residues 92–144 (CKVDILYYRKDASSFRCLVDVVPVKNEDGAVIMFILNFEDLAQLLAKCSSRSL) form the PAC domain. Residues 262–282 (LILLLVIYTAVFTPYSAAFLL) form a helical membrane-spanning segment. Over 283 to 298 (SDQDESRRGACSYTCS) the chain is Extracellular. The helical transmembrane segment at 299-319 (PLTVVDLIVDIMFVVDIVINF) threads the bilayer. At 320–340 (RTTYVNTNDEVVSHPRRIAVH) the chain is on the cytoplasmic side. Residues 341–361 (YFKGWFLIDMVAAIPFDLLIF) form a helical membrane-spanning segment. Topologically, residues 362 to 370 (RTGSDETTT) are extracellular. A helical; Voltage-sensor membrane pass occupies residues 371–391 (LIGLLKTARLLRLVRVARKLD). Residues 392–398 (RYSEYGA) are Cytoplasmic-facing. A helical transmembrane segment spans residues 399–419 (AVLFLLMCTFALIAHWLACIW). Over 420–463 (YAIGNVERPYLEHKIGWLDSLGVQLGKRYNGSDPASGPSVQDKY) the chain is Extracellular. The N-linked (GlcNAc...) (complex) asparagine glycan is linked to N449. Positions 464–484 (VTALYFTFSSLTSVGFGNVSP) form an intramembrane region, pore-forming. Positions 476–481 (SVGFGN) match the Selectivity filter motif. The Extracellular segment spans residues 485-490 (NTNSEK). Residues 491–511 (VFSICVMLIGSLMYASIFGNV) traverse the membrane as a helical segment. Residues 512–958 (SAIIQRLYSG…DPGFAGSWGH (447 aa)) are Cytoplasmic-facing. The cNMP-binding domain stretch occupies residues 594 to 694 (AFSGAGKGCL…IQRADLLEVL (101 aa)). Disordered stretches follow at residues 720–751 (GLHS…PPLS) and 845–910 (TTSP…PPLA). Residues 724-745 (SPRQAPGSQDHQGFFLSDNQSD) are compositionally biased toward polar residues.

This sequence belongs to the potassium channel family. H (Eag) (TC 1.A.1.20) subfamily. Kv11.2/KCNH6 sub-subfamily. The potassium channel is probably composed of a homo- or heterotetrameric complex of pore-forming alpha subunits that can associate only within their subfamily. Expressed in prolactin-secreting adenomas.

The protein localises to the cell membrane. It carries out the reaction K(+)(in) = K(+)(out). Its function is as follows. Pore-forming (alpha) subunit of voltage-gated inwardly rectifying potassium channel. Characterized by unusual gating kinetics by producing relatively small outward currents during membrane depolarization and large inward currents during subsequent repolarization which reflect a rapid inactivation during depolarization and quick recovery from inactivation but slow deactivation (closing) during repolarization. Activates even more slowly than KCNH2. The polypeptide is Voltage-gated inwardly rectifying potassium channel KCNH6 (Homo sapiens (Human)).